A 585-amino-acid chain; its full sequence is Cytochrome P450 monooxygenase AOL_s00215g278 (585 aa).

Residue Cys-518 coordinates heme.

The protein belongs to the cytochrome P450 family. Heme serves as cofactor.

It functions in the pathway secondary metabolite biosynthesis; terpenoid biosynthesis. Its function is as follows. Cytochrome P450 monooxygenase; part of the gene cluster that mediates the biosynthesis of sesquiterpenyl epoxy-cyclohexenoids (SECs) such as anthrobotrisins and arthrosporols, metabolites that possess a novel hybrid carbon skeleton consisting of a polyketide-derived epoxycyclohexenol combined with a terpenoid-derived monocyclic sesquiterpenol substructure (PKS-PTS hybrid). The SEC pathway plays an important role for fungal soil colonization via decreasing fungal nematode-capturing ability. Within the pathway, the cytochrome P450 monooxygenase AOL_s00215g278 plays a role in the oxygenation of the phenol moiety, most likely in the epoxy formation. The pathway begins with the biosynthesis of 6-methylsalicylic acid (6-MSA), the first precursor of the polyketide-derived epoxycyclohexenol in arthrosporols, by the polyketide synthase (PKS) AOL_s00215g283 via condensation of 1 acetate and 3 malonate units. The 6-methylsalicylic acid decarboxylase AOL_s00215g281 then catalyzes the decarboxylation of 6-methylsalicylic acid to yield m-cresol. The cytochrome P450 monooxygenase AOL_s00215g282 further oxidizes m-cresol to yield toluquinol. With the assistance of the oxidoreductase AOL_s00215g277, the polyprenyl transferase AOL_s00215g276 catalyzes the farnesylation of toluquinol to produce farnesyl hydroquinone, the hybrid precursor for biosynthesis of SECs. Farnesyl hydroquinone undergoes epoxidation and then subsequent dehydrogenation to form farnesyl epoxy-quinone, the first and simplest SEC. The cytochrome P450 monooxygenase AOL_s00215g278 and the FAD-dependent monooxygenase AOL_s00215g279 might be involved in the oxygenation of the phenol moiety, most likely in the epoxy formation. The cytochrome P450 monooxygenases AOL_s00215g274 and AOL_s00215g280 are involved in specific regional ketone reductions at respectively C-4 and C-1 of farnesyl epoxy-quinone PubMed:33823587. In Arthrobotrys oligospora (strain ATCC 24927 / CBS 115.81 / DSM 1491) (Nematode-trapping fungus), this protein is Cytochrome P450 monooxygenase AOL_s00215g278.